Reading from the N-terminus, the 404-residue chain is Argininosuccinate synthase (404 aa).

ATP contacts are provided by residues 10–18 and Ala37; that span reads AYSGGLDTS. The L-citrulline site is built by Tyr89 and Ser94. ATP is bound at residue Gly119. 3 residues coordinate L-aspartate: Thr121, Asn125, and Asp126. Asn125 provides a ligand contact to L-citrulline. Arg129, Ser178, Ser187, Glu263, and Tyr275 together coordinate L-citrulline.

It belongs to the argininosuccinate synthase family. Type 1 subfamily. As to quaternary structure, homotetramer.

Its subcellular location is the cytoplasm. It catalyses the reaction L-citrulline + L-aspartate + ATP = 2-(N(omega)-L-arginino)succinate + AMP + diphosphate + H(+). Its pathway is amino-acid biosynthesis; L-arginine biosynthesis; L-arginine from L-ornithine and carbamoyl phosphate: step 2/3. The chain is Argininosuccinate synthase from Photobacterium profundum (strain SS9).